We begin with the raw amino-acid sequence, 132 residues long: Large ribosomal subunit protein bL17 (132 aa).

This sequence belongs to the bacterial ribosomal protein bL17 family. Part of the 50S ribosomal subunit. Contacts protein L32.

This chain is Large ribosomal subunit protein bL17, found in Shewanella woodyi (strain ATCC 51908 / MS32).